The following is a 126-amino-acid chain: Nascent polypeptide-associated complex protein (126 aa).

One can recognise an NAC-A/B domain in the interval 10–77 (PRMMKQMQKM…AKKVAKEEEK (68 aa)).

The protein belongs to the NAC-alpha family. As to quaternary structure, homodimer. Interacts with the ribosome. Binds ribosomal RNA.

Contacts the emerging nascent chain on the ribosome. The protein is Nascent polypeptide-associated complex protein of Methanococcus maripaludis (strain DSM 14266 / JCM 13030 / NBRC 101832 / S2 / LL).